The primary structure comprises 1119 residues: Leucine-rich repeats and immunoglobulin-like domains protein 3 (1119 aa).

A signal peptide spans 1–24; it reads MSAPSLRARAAGLGLLLCAVLGRA. The LRRNT domain maps to 38 to 74; sequence PSGVAAERPCPTTCRCLGDLLDCSRKRLARLPEPLPS. 15 LRR repeats span residues 75-96, 99-120, 122-142, 146-167, 168-189, 193-214, 216-237, 240-261, 264-285, 288-309, 312-333, 336-357, 360-382, 387-408, and 411-432; these read WVARLDLSHNRLSFIKASSMSH, SLREVKLNNNELETIPNLGPVS, NITLLSLAGNRIVEILPEHLK, SLETLDLSSNNISELQTAFPAL, QLKYLYLNSNRVTSMEPGYFDN, TLLVLKLNRNRISAIPPKMFKL, QLQHLELNRNKIKNVDGLTFQG, ALKSLKMQRNGVTKLMDGAFWG, NMEILQLDHNNLTEITKGWLYG, MLQELHLSQNAINRISPDAWEF, KLSELDLTFNHLSRLDDSSFLG, LLNTLHIGNNRVSYIADCAFRG, SLKTLDLKNNEISWTIEDMNGAF, KLRRLILQGNRIRSITKKAFTG, and ALEHLDLSDNAIMSLQGNAFSQ. N-linked (GlcNAc...) asparagine glycosylation is found at asparagine 122 and asparagine 156. A glycan (N-linked (GlcNAc...) asparagine) is linked at asparagine 274. N-linked (GlcNAc...) asparagine glycosylation is found at asparagine 442, asparagine 469, and asparagine 515. The 52-residue stretch at 444 to 495 folds into the LRRCT domain; the sequence is SSLLCDCQLKWLPQWVAENNFQSFVNASCAHPQLLKGRSIFAVSPDGFVCDD. 3 Ig-like C2-type domains span residues 499-598, 603-692, and 697-783; these read PQIT…AKLT, PSFT…ATLT, and PSFL…VRLS. Intrachain disulfides connect cysteine 520–cysteine 581 and cysteine 624–cysteine 676. 2 N-linked (GlcNAc...) asparagine glycosylation sites follow: asparagine 688 and asparagine 729. Residues cysteine 718 and cysteine 767 are joined by a disulfide bond. Residues 810 to 830 traverse the membrane as a helical segment; that stretch reads VVIIAVVCCVVGTSLVWVVII. 4 N-linked (GlcNAc...) asparagine glycosylation sites follow: asparagine 905, asparagine 987, asparagine 999, and asparagine 1016. The interval 1073-1093 is disordered; that stretch reads SSPDLDSGSEEDGKERTDFQE. A compositionally biased stretch (basic and acidic residues) spans 1083-1093; the sequence is EDGKERTDFQE.

Interacts with EGFR, ERBB2 and ERBB4 (in vitro). As to expression, widely expressed.

Its subcellular location is the cell membrane. It is found in the cytoplasmic vesicle membrane. In terms of biological role, may play a role in craniofacial and inner ear morphogenesis during embryonic development. May act within the otic vesicle epithelium to control formation of the lateral semicircular canal in the inner ear, possibly by restricting the expression of NTN1. This is Leucine-rich repeats and immunoglobulin-like domains protein 3 (LRIG3) from Homo sapiens (Human).